The primary structure comprises 435 residues: 5-methylthioadenosine/S-adenosylhomocysteine deaminase (435 aa).

Zn(2+)-binding residues include His-65 and His-67. The substrate site is built by Glu-94, Arg-150, and His-189. His-216 is a binding site for Zn(2+). Positions 219 and 304 each coordinate substrate. Asp-304 is a Zn(2+) binding site.

It belongs to the metallo-dependent hydrolases superfamily. MTA/SAH deaminase family. Requires Zn(2+) as cofactor.

The enzyme catalyses S-adenosyl-L-homocysteine + H2O + H(+) = S-inosyl-L-homocysteine + NH4(+). The catalysed reaction is S-methyl-5'-thioadenosine + H2O + H(+) = S-methyl-5'-thioinosine + NH4(+). Functionally, catalyzes the deamination of 5-methylthioadenosine and S-adenosyl-L-homocysteine into 5-methylthioinosine and S-inosyl-L-homocysteine, respectively. Is also able to deaminate adenosine. In Bacillus cereus (strain 03BB102), this protein is 5-methylthioadenosine/S-adenosylhomocysteine deaminase.